A 325-amino-acid chain; its full sequence is Eukaryotic translation initiation factor 3 subunit I (325 aa).

4 WD repeats span residues 8-47, 50-91, 144-183, and 186-225; these read GHER…RLGT, GHTG…ALLK, CNDS…VLVN, and EHSR…HQKT. Phosphothreonine is present on threonine 219. Lysine 264 is modified (N6-acetyllysine). Lysine 282 participates in a covalent cross-link: Glycyl lysine isopeptide (Lys-Gly) (interchain with G-Cter in ubiquitin). The WD 5 repeat unit spans residues 283 to 324; that stretch reads GHFGLINSVAFHPDGKSYSSGGEDGYVRIHYFDPQYFEFEFE. Phosphotyrosine is present on tyrosine 308.

It belongs to the eIF-3 subunit I family. As to quaternary structure, component of the eukaryotic translation initiation factor 3 (eIF-3) complex, which is composed of 13 subunits: EIF3A, EIF3B, EIF3C, EIF3D, EIF3E, EIF3F, EIF3G, EIF3H, EIF3I, EIF3J, EIF3K, EIF3L and EIF3M. The eIF-3 complex appears to include 3 stable modules: module A is composed of EIF3A, EIF3B, EIF3G and EIF3I; module B is composed of EIF3F, EIF3H, and EIF3M; and module C is composed of EIF3C, EIF3D, EIF3E, EIF3K and EIF3L. EIF3C of module C binds EIF3B of module A and EIF3H of module B, thereby linking the three modules. EIF3J is a labile subunit that binds to the eIF-3 complex via EIF3B. The eIF-3 complex interacts with RPS6KB1 under conditions of nutrient depletion. Mitogenic stimulation leads to binding and activation of a complex composed of MTOR and RPTOR, leading to phosphorylation and release of RPS6KB1 and binding of EIF4B to eIF-3. Phosphorylated by TGF-beta type II receptor.

The protein localises to the cytoplasm. In terms of biological role, component of the eukaryotic translation initiation factor 3 (eIF-3) complex, which is required for several steps in the initiation of protein synthesis. The eIF-3 complex associates with the 40S ribosome and facilitates the recruitment of eIF-1, eIF-1A, eIF-2:GTP:methionyl-tRNAi and eIF-5 to form the 43S pre-initiation complex (43S PIC). The eIF-3 complex stimulates mRNA recruitment to the 43S PIC and scanning of the mRNA for AUG recognition. The eIF-3 complex is also required for disassembly and recycling of post-termination ribosomal complexes and subsequently prevents premature joining of the 40S and 60S ribosomal subunits prior to initiation. The eIF-3 complex specifically targets and initiates translation of a subset of mRNAs involved in cell proliferation, including cell cycling, differentiation and apoptosis, and uses different modes of RNA stem-loop binding to exert either translational activation or repression. This chain is Eukaryotic translation initiation factor 3 subunit I, found in Pongo abelii (Sumatran orangutan).